The sequence spans 316 residues: MST50-interacting protein 11 (316 aa).

WD repeat units lie at residues 13 to 53 (GHNG…TSYG), 61 to 100 (GHSH…TTRR), 103 to 142 (GHTN…KYTI), 146 to 187 (GHSE…LQTD), 190 to 229 (GHTG…HLYS), 231 to 269 (NAND…KVDE), and 281 to 316 (SREP…MSRA).

Belongs to the WD repeat G protein beta family. Ribosomal protein RACK1 subfamily. Interacts with MST50 and MCK1.

Involved in regulating the cell wall integrity and MPS1 activation via its interaction with the MAPKKK MCK1. The protein is MST50-interacting protein 11 of Pyricularia oryzae (strain 70-15 / ATCC MYA-4617 / FGSC 8958) (Rice blast fungus).